The chain runs to 188 residues: Ribosome hibernation promotion factor (188 aa).

The tract at residues 93–125 (KTRVNRKKRKESEHEPFPATPETPPETAVDHDK) is disordered.

Belongs to the HPF/YfiA ribosome-associated protein family. Long HPF subfamily. As to quaternary structure, interacts with 100S ribosomes.

It is found in the cytoplasm. Required for dimerization of active 70S ribosomes into 100S ribosomes in stationary phase; 100S ribosomes are translationally inactive and sometimes present during exponential growth. The chain is Ribosome hibernation promotion factor from Staphylococcus carnosus (strain TM300).